The following is a 225-amino-acid chain: MDIRPNHTIYINNMNDKIKKEELKRSLYALFSQFGHVVDIVALKTMKMRGQAFVIFKELGSSTNALRQLQGFPFYGKPMRIQYAKTDSDIISKMRGTFADKEKKKEKKKAKTMEQAAAAANKKPGQGTPNAANTQGTAAPNPQVPDYPPNYILFLNNLPEETNEMMLSMLFNQFPGFKEVRLVPGRHDIAFVEFENDGQAGAARDALQGFKITPSHAMKITYAKK.

The RRM 1 domain occupies His7–Thr86. The segment at Asp100–Val144 is disordered. Lys111 is modified (N6-acetyllysine; alternate). A Glycyl lysine isopeptide (Lys-Gly) (interchain with G-Cter in SUMO2); alternate cross-link involves residue Lys111. The span at Met113 to Lys123 shows a compositional bias: low complexity. Residues Gly127 to Pro140 are compositionally biased toward polar residues. Tyr151 bears the Phosphotyrosine mark. One can recognise an RRM 2 domain in the interval Tyr151–Lys225.

The protein belongs to the RRM U1 A/B'' family. Identified in the spliceosome B complex. Identified in the spliceosome C complex. Present in a spliceosome complex assembled in vitro, and composed of SNRPB2, HPRP8BP and CRNKL1. Contributes to the binding of stem loop IV of U2 snRNA with SNRPP1.

It is found in the nucleus. In terms of biological role, involved in pre-mRNA splicing as component of the spliceosome. Associated with sn-RNP U2, where it contributes to the binding of stem loop IV of U2 snRNA. The chain is U2 small nuclear ribonucleoprotein B'' (Snrpb2) from Mus musculus (Mouse).